A 261-amino-acid polypeptide reads, in one-letter code: HLA class II histocompatibility antigen, DQ beta 1 chain (261 aa).

The N-terminal stretch at 1 to 32 (MSWKKALRIPGGLRAATVTLMLAMLSTPVAEG) is a signal peptide. Residues 33–126 (RDSPEDFVYQ…LELRTTLQRR (94 aa)) form a beta-1 region. Topologically, residues 33-230 (RDSPEDFVYQ…RAQSESAQSK (198 aa)) are extracellular. 2 cysteine pairs are disulfide-bonded: Cys47-Cys111 and Cys149-Cys205. The N-linked (GlcNAc...) asparagine glycan is linked to Asn51. Residues 127–220 (VEPTVTISPS…SLQNPITVEW (94 aa)) are beta-2. The region spanning 129-217 (PTVTISPSRT…EHPSLQNPIT (89 aa)) is the Ig-like C1-type domain. Residues 221–230 (RAQSESAQSK) are connecting peptide. A helical transmembrane segment spans residues 231–251 (MLSGIGGFVLGLIFLGLGLII). Residues 252 to 261 (HHRSQKGLLH) are Cytoplasmic-facing.

Belongs to the MHC class II family. Heterodimer of an alpha and a beta subunit; also referred as MHC class II molecule. In the endoplasmic reticulum (ER) it forms a heterononamer; 3 MHC class II molecules bind to a CD74 homotrimer (also known as invariant chain or HLA class II histocompatibility antigen gamma chain). In the endosomal/lysosomal system; CD74 undergoes sequential degradation by various proteases; leaving a small fragment termed CLIP on each MHC class II molecule. MHC class II molecule interacts with HLA_DM, and HLA_DO in B-cells, in order to release CLIP and facilitate the binding of antigenic peptides.

It is found in the cell membrane. The protein localises to the endoplasmic reticulum membrane. Its subcellular location is the golgi apparatus. It localises to the trans-Golgi network membrane. The protein resides in the endosome membrane. It is found in the lysosome membrane. Binds peptides derived from antigens that access the endocytic route of antigen presenting cells (APC) and presents them on the cell surface for recognition by the CD4 T-cells. The peptide binding cleft accommodates peptides of 10-30 residues. The peptides presented by MHC class II molecules are generated mostly by degradation of proteins that access the endocytic route, where they are processed by lysosomal proteases and other hydrolases. Exogenous antigens that have been endocytosed by the APC are thus readily available for presentation via MHC II molecules, and for this reason this antigen presentation pathway is usually referred to as exogenous. As membrane proteins on their way to degradation in lysosomes as part of their normal turn-over are also contained in the endosomal/lysosomal compartments, exogenous antigens must compete with those derived from endogenous components. Autophagy is also a source of endogenous peptides, autophagosomes constitutively fuse with MHC class II loading compartments. In addition to APCs, other cells of the gastrointestinal tract, such as epithelial cells, express MHC class II molecules and CD74 and act as APCs, which is an unusual trait of the GI tract. To produce a MHC class II molecule that presents an antigen, three MHC class II molecules (heterodimers of an alpha and a beta chain) associate with a CD74 trimer in the ER to form a heterononamer. Soon after the entry of this complex into the endosomal/lysosomal system where antigen processing occurs, CD74 undergoes a sequential degradation by various proteases, including CTSS and CTSL, leaving a small fragment termed CLIP (class-II-associated invariant chain peptide). The removal of CLIP is facilitated by HLA-DM via direct binding to the alpha-beta-CLIP complex so that CLIP is released. HLA-DM stabilizes MHC class II molecules until primary high affinity antigenic peptides are bound. The MHC II molecule bound to a peptide is then transported to the cell membrane surface. In B-cells, the interaction between HLA-DM and MHC class II molecules is regulated by HLA-DO. Primary dendritic cells (DCs) also to express HLA-DO. Lysosomal microenvironment has been implicated in the regulation of antigen loading into MHC II molecules, increased acidification produces increased proteolysis and efficient peptide loading. This Homo sapiens (Human) protein is HLA class II histocompatibility antigen, DQ beta 1 chain (HLA-DQB1).